Here is a 159-residue protein sequence, read N- to C-terminus: METQRASLSLGRWSLWLLLLGLALPSASAQALSYREAVLRAVDQLNEKSSEANLYRLLELDPPPKEDDENPNIPKPVSFRVKETVCPRTSQQSPEQCDFKENGLLKECVGTVTLDQVGSNFDITCAVPQSVGGLRSLGRKILRAWKKYGPIIVPIIRIG.

Residues 1–29 (METQRASLSLGRWSLWLLLLGLALPSASA) form the signal peptide. Gln-30 carries the pyrrolidone carboxylic acid modification. Residues 30-131 (QALSYREAVL…DITCAVPQSV (102 aa)) constitute a propeptide that is removed on maturation. Cystine bridges form between Cys-86–Cys-97 and Cys-108–Cys-125.

This sequence belongs to the cathelicidin family.

The protein localises to the secreted. In terms of biological role, exerts a potent antimicrobial activity against Gram-negative and Gram-positive bacteria, including methicillin-resistant Staphylococcus aureus, and fungi. The sequence is that of Cathelicidin-5 (CATHL5) from Bos taurus (Bovine).